The sequence spans 239 residues: Uridylate kinase (239 aa).

Residue 10–13 (KFSG) coordinates ATP. The interval 18–23 (GENGFG) is involved in allosteric activation by GTP. Residue Gly-52 coordinates UMP. 2 residues coordinate ATP: Gly-53 and Arg-57. UMP is bound by residues Asp-73 and 134–141 (TGNPYFTT). The ATP site is built by Thr-161, Tyr-167, and Asp-170.

The protein belongs to the UMP kinase family. In terms of assembly, homohexamer.

It localises to the cytoplasm. The catalysed reaction is UMP + ATP = UDP + ADP. The protein operates within pyrimidine metabolism; CTP biosynthesis via de novo pathway; UDP from UMP (UMPK route): step 1/1. Allosterically activated by GTP. Inhibited by UTP. Catalyzes the reversible phosphorylation of UMP to UDP. This is Uridylate kinase from Campylobacter jejuni subsp. doylei (strain ATCC BAA-1458 / RM4099 / 269.97).